Reading from the N-terminus, the 83-residue chain is Cytochrome b559 subunit alpha (83 aa).

A helical transmembrane segment spans residues 21 to 35 (VIHSITIPSLFIAGW). Residue histidine 23 coordinates heme.

Belongs to the PsbE/PsbF family. In terms of assembly, heterodimer of an alpha subunit and a beta subunit. PSII is composed of 1 copy each of membrane proteins PsbA, PsbB, PsbC, PsbD, PsbE, PsbF, PsbH, PsbI, PsbJ, PsbK, PsbL, PsbM, PsbT, PsbX, PsbY, PsbZ, Psb30/Ycf12, at least 3 peripheral proteins of the oxygen-evolving complex and a large number of cofactors. It forms dimeric complexes. It depends on heme b as a cofactor.

The protein localises to the plastid. The protein resides in the chloroplast thylakoid membrane. Its function is as follows. This b-type cytochrome is tightly associated with the reaction center of photosystem II (PSII). PSII is a light-driven water:plastoquinone oxidoreductase that uses light energy to abstract electrons from H(2)O, generating O(2) and a proton gradient subsequently used for ATP formation. It consists of a core antenna complex that captures photons, and an electron transfer chain that converts photonic excitation into a charge separation. The protein is Cytochrome b559 subunit alpha of Psilotum nudum (Whisk fern).